The primary structure comprises 295 residues: sn-glycerol-3-phosphate transport system permease protein UgpA (295 aa).

The Cytoplasmic segment spans residues 1-11 (MSSSRPVFRSR). The helical transmembrane segment at 12 to 32 (WLPYLLVAPQLIITVIFFIWP) threads the bilayer. The Periplasmic segment spans residues 33–80 (AGEALWYSLQSVDPFGFSSQFVGLDNFVTLFHDSYYLDAFWTTIKFST). The 209-residue stretch at 76–284 (IKFSTFVTVS…FLVIVLTVVQ (209 aa)) folds into the ABC transmembrane type-1 domain. Residues 81–101 (FVTVSGLLVSLFFAALVEYIV) traverse the membrane as a helical segment. Topologically, residues 102 to 109 (RGSRFYQT) are cytoplasmic. Residues 110–130 (LMLLPYAVAPAVAAVLWIFLF) form a helical membrane-spanning segment. At 131–156 (NPGRGLITHFLAEFGYDWNHAQNSGQ) the chain is on the periplasmic side. A helical membrane pass occupies residues 157–177 (AMFLVVFASVWKQISYNFLFF). Over 178–207 (YAALQSIPRSLIEAAAIDGAGPIRRFFKIA) the chain is Cytoplasmic. Residues 208-228 (LPLIAPVSFFLLVVNLVYAFF) form a helical membrane-spanning segment. Residues 229 to 262 (DTFPVIDAATSGGPVQATTTLIYKIYREGFTGLD) are Periplasmic-facing. A helical transmembrane segment spans residues 263–283 (LASSAAQSVVLMFLVIVLTVV). The Cytoplasmic portion of the chain corresponds to 284-295 (QFRYVESKVRYQ).

The protein belongs to the binding-protein-dependent transport system permease family. UgpAE subfamily. As to quaternary structure, the complex is composed of two ATP-binding proteins (UgpC), two transmembrane proteins (UgpA and UgpE) and a solute-binding protein (UgpB).

It localises to the cell inner membrane. In terms of biological role, part of the ABC transporter complex UgpBAEC involved in sn-glycerol-3-phosphate (G3P) import. Probably responsible for the translocation of the substrate across the membrane. This Escherichia coli (strain UTI89 / UPEC) protein is sn-glycerol-3-phosphate transport system permease protein UgpA (ugpA).